Reading from the N-terminus, the 131-residue chain is Fumarate reductase subunit C (131 aa).

Helical transmembrane passes span 30-50 (EGTA…LFAL), 57-77 (WAGF…LITL), and 109-129 (IIKS…FVAL).

It belongs to the FrdC family. Part of an enzyme complex containing four subunits: a flavoprotein (FrdA), an iron-sulfur protein (FrdB), and two hydrophobic anchor proteins (FrdC and FrdD).

The protein resides in the cell inner membrane. Functionally, two distinct, membrane-bound, FAD-containing enzymes are responsible for the catalysis of fumarate and succinate interconversion; fumarate reductase is used in anaerobic growth, and succinate dehydrogenase is used in aerobic growth. Anchors the catalytic components of the fumarate reductase complex to the cell inner membrane, binds quinones. The chain is Fumarate reductase subunit C from Shigella flexneri.